The chain runs to 102 residues: MATKLIVIAFLCAALIAVVQSAPQYAQGEEPTYDEDDDEPIKPHSSADPDASYEEFDPSQLTEYANTAQDPGRRPHFLEQANSNNGDQLPSQSDSSSESTEH.

The N-terminal stretch at 1 to 21 is a signal peptide; the sequence is MATKLIVIAFLCAALIAVVQS. The disordered stretch occupies residues 25–102; the sequence is YAQGEEPTYD…SDSSSESTEH (78 aa). Positions 59–69 are enriched in polar residues; the sequence is SQLTEYANTAQ. Residues 70 to 73 form a blocks active site cleft of host thrombin in a reverse direction compared to substrates region; the sequence is DPGR. Polar residues predominate over residues 80–90; that stretch reads QANSNNGDQLP. The segment covering 91–102 has biased composition (low complexity); that stretch reads SQSDSSSESTEH.

The protein belongs to the anophelin family. In terms of assembly, interacts with human F2 (thrombin); the interaction results in thrombin inhibition.

The protein resides in the secreted. In terms of biological role, salivary protein with anticoagulant activity that inhibits host thrombin (F2). The sequence is that of Salivary thrombin inhibitor anophelin from Anopheles funestus (African malaria mosquito).